The following is a 396-amino-acid chain: Elongation factor Tu (396 aa).

The tr-type G domain occupies 10–206 (KPHCNIGTIG…AVDAYIPQPE (197 aa)). The tract at residues 19-26 (GHVDHGKT) is G1. Residue 19-26 (GHVDHGKT) participates in GTP binding. Threonine 26 is a binding site for Mg(2+). A G2 region spans residues 60 to 64 (GITIS). Residues 81–84 (DCPG) form a G3 region. Residues 81–85 (DCPGH) and 136–139 (NKCD) contribute to the GTP site. Positions 136–139 (NKCD) are G4. Residues 174–176 (SAL) form a G5 region.

This sequence belongs to the TRAFAC class translation factor GTPase superfamily. Classic translation factor GTPase family. EF-Tu/EF-1A subfamily. As to quaternary structure, monomer.

It localises to the cytoplasm. The catalysed reaction is GTP + H2O = GDP + phosphate + H(+). In terms of biological role, GTP hydrolase that promotes the GTP-dependent binding of aminoacyl-tRNA to the A-site of ribosomes during protein biosynthesis. This is Elongation factor Tu from Nitrobacter hamburgensis (strain DSM 10229 / NCIMB 13809 / X14).